The sequence spans 294 residues: 2,4-diacetylphloroglucinol hydrolase (294 aa).

Zn(2+)-binding residues include H129, E160, H270, and E274.

It belongs to the DAPG/phloretin hydrolase family. In terms of assembly, homodimer. Zn(2+) is required as a cofactor.

The enzyme catalyses 2,4-diacetylphloroglucinol + H2O = 2-acetylphloroglucinol + acetate. With respect to regulation, specifically and significantly activated by CoCl(2). Competitively inhibited by MAPG, but not by 2-hydroxy- and 4-hydroxyacetophenone. Its function is as follows. Hydrolase that specifically degrades the potent antimicrobial compound 2,4-diacetylphloroglucinol (DAPG) to equimolar amounts of mildly toxic monoacetylphloroglucinol (MAPG) and acetate. This chain is 2,4-diacetylphloroglucinol hydrolase, found in Pseudomonas sp.